The primary structure comprises 400 residues: Methylthioribose kinase (400 aa).

Residues Asn-40, Lys-57, and 111–113 (EDL) contribute to the ATP site. Asp-229 serves as a coordination point for substrate. Residue 246–248 (DAE) participates in ATP binding. Residue Arg-344 coordinates substrate.

The protein belongs to the methylthioribose kinase family. As to quaternary structure, homodimer.

The enzyme catalyses 5-(methylsulfanyl)-D-ribose + ATP = 5-(methylsulfanyl)-alpha-D-ribose 1-phosphate + ADP + H(+). It participates in amino-acid biosynthesis; L-methionine biosynthesis via salvage pathway; S-methyl-5-thio-alpha-D-ribose 1-phosphate from S-methyl-5'-thioadenosine (hydrolase route): step 2/2. In terms of biological role, catalyzes the phosphorylation of methylthioribose into methylthioribose-1-phosphate. This is Methylthioribose kinase from Pectobacterium atrosepticum (strain SCRI 1043 / ATCC BAA-672) (Erwinia carotovora subsp. atroseptica).